The sequence spans 567 residues: Glutamate--tRNA ligase (567 aa).

A 'HIGH' region motif is present at residues 106 to 116; it reads PNPDGPLHLGN.

Belongs to the class-I aminoacyl-tRNA synthetase family. Glutamate--tRNA ligase type 2 subfamily.

The protein localises to the cytoplasm. The catalysed reaction is tRNA(Glu) + L-glutamate + ATP = L-glutamyl-tRNA(Glu) + AMP + diphosphate. Catalyzes the attachment of glutamate to tRNA(Glu) in a two-step reaction: glutamate is first activated by ATP to form Glu-AMP and then transferred to the acceptor end of tRNA(Glu). The protein is Glutamate--tRNA ligase of Sulfolobus acidocaldarius (strain ATCC 33909 / DSM 639 / JCM 8929 / NBRC 15157 / NCIMB 11770).